We begin with the raw amino-acid sequence, 315 residues long: beta-hydroxyaspartate dehydratase (315 aa).

At lysine 53 the chain carries N6-(pyridoxal phosphate)lysine. Residues asparagine 80, 179–183 (GGGGM), and threonine 303 contribute to the pyridoxal 5'-phosphate site.

It depends on pyridoxal 5'-phosphate as a cofactor.

It carries out the reaction (3S)-3-hydroxy-D-aspartate = iminosuccinate + H2O. Catalyzes the dehydration of (2R,3S)-beta-hydroxyaspartate ((3S)-3-hydroxy-D-aspartate) into iminosuccinate. Is essential for the growth of P.denitrificans in the presence of glycolate and glyoxylate since it functions in glyoxylate assimilation via the beta-hydroxyaspartate cycle (BHAC). The protein is beta-hydroxyaspartate dehydratase of Paracoccus denitrificans (strain Pd 1222).